Here is a 434-residue protein sequence, read N- to C-terminus: Enolase (434 aa).

Glutamine 163 contacts (2R)-2-phosphoglycerate. Glutamate 205 acts as the Proton donor in catalysis. Aspartate 242, glutamate 291, and aspartate 318 together coordinate Mg(2+). (2R)-2-phosphoglycerate contacts are provided by lysine 343, arginine 372, serine 373, and lysine 394. Lysine 343 serves as the catalytic Proton acceptor.

Belongs to the enolase family. Requires Mg(2+) as cofactor.

It is found in the cytoplasm. The protein localises to the secreted. The protein resides in the cell surface. The catalysed reaction is (2R)-2-phosphoglycerate = phosphoenolpyruvate + H2O. Its pathway is carbohydrate degradation; glycolysis; pyruvate from D-glyceraldehyde 3-phosphate: step 4/5. Functionally, catalyzes the reversible conversion of 2-phosphoglycerate (2-PG) into phosphoenolpyruvate (PEP). It is essential for the degradation of carbohydrates via glycolysis. This Streptococcus thermophilus (strain ATCC BAA-491 / LMD-9) protein is Enolase.